The following is a 649-amino-acid chain: Thioredoxin reductase 1, cytoplasmic (649 aa).

The residue at position 1 (methionine 1) is an N-acetylmethionine. Residues 1–49 (MGCAEGKAVAAAAPTELQTKGKNGDGRRRSAKDHHPGKTLPENPAGFTS) are disordered. Positions 22 to 36 (KNGDGRRRSAKDHHP) are enriched in basic and acidic residues. A Glutaredoxin domain is found at 56 to 156 (RALLQAYIDG…KLLKMNGPED (101 aa)). Residues 145 to 149 (LQKLL) are required for interaction with ESR1 and ESR2. FAD contacts are provided by residues 172–173 (SG), 192–193 (DF), 208–209 (TC), and 213–217 (GCIPK). Residues cysteine 209 and cysteine 214 are joined by a disulfide bond. N6-succinyllysine is present on lysine 218. Tyrosine 281 carries the post-translational modification Phosphotyrosine. FAD-binding positions include 281–282 (YG) and threonine 311. NADP(+) contacts are provided by residues arginine 316, 348–354 (ASYVALE), 371–372 (RS), arginine 376, 376–378 (RGF), 442–443 (GR), and lysine 465. Tyrosine 350 provides a ligand contact to FAD. Residues aspartate 484, 491–493 (ELT), and histidine 622 each bind FAD. Glutamate 491 contributes to the NADP(+) binding site. Residue histidine 622 is the Proton acceptor of the active site. The segment at residues 647 to 648 (CU) is a cross-link (cysteinyl-selenocysteine (Cys-Sec)). A non-standard amino acid (selenocysteine) is located at residue selenocysteine 648.

This sequence belongs to the class-I pyridine nucleotide-disulfide oxidoreductase family. Homodimer. Interacts with HERC5. In terms of assembly, interacts with ESR1 and ESR2. It depends on FAD as a cofactor. The N-terminus is blocked. Post-translationally, ISGylated. Expressed predominantly in Leydig cells (at protein level). Also expressed in ovary, spleen, heart, liver, kidney and pancreas and in a number of cancer cell lines. In terms of tissue distribution, widely expressed with highest levels in kidney, testis, uterus, ovary, prostate, placenta and fetal liver.

The protein resides in the cytoplasm. It localises to the nucleus. It catalyses the reaction [thioredoxin]-dithiol + NADP(+) = [thioredoxin]-disulfide + NADPH + H(+). The catalysed reaction is H2O2 + NADPH + H(+) = NADP(+) + 2 H2O. Functionally, reduces disulfideprotein thioredoxin (Trx) to its dithiol-containing form. Homodimeric flavoprotein involved in the regulation of cellular redox reactions, growth and differentiation. Contains a selenocysteine residue at the C-terminal active site that is essential for catalysis. Also has reductase activity on hydrogen peroxide (H2O2). Induces actin and tubulin polymerization, leading to formation of cell membrane protrusions. In terms of biological role, enhances the transcriptional activity of estrogen receptors ESR1 and ESR2. Its function is as follows. Enhances the transcriptional activity of the estrogen receptor ESR2 only. Mediates cell death induced by a combination of interferon-beta and retinoic acid. The sequence is that of Thioredoxin reductase 1, cytoplasmic from Homo sapiens (Human).